A 673-amino-acid polypeptide reads, in one-letter code: Bifunctional polymyxin resistance protein ArnA (673 aa).

Residues 1–311 (MKAIVFAYHD…EMGMVPQARL (311 aa)) are formyltransferase ArnAFT. The active-site Proton donor; for formyltransferase activity is the His-104. (6R)-10-formyltetrahydrofolate is bound by residues Arg-114 and 136-140 (VSRAD). Positions 321-673 (RRTRVLILGV…HTADATDTQG (353 aa)) are dehydrogenase ArnADH. NAD(+) is bound by residues Asp-354 and 375–376 (DI). Residues Ala-400, Tyr-405, and 439–440 (TS) each bind UDP-alpha-D-glucuronate. Residue Glu-441 is the Proton acceptor; for decarboxylase activity of the active site. UDP-alpha-D-glucuronate is bound by residues Arg-467, Asn-499, 533-542 (KLVDGGAQKR), and Tyr-620. Arg-626 acts as the Proton donor; for decarboxylase activity in catalysis.

This sequence in the N-terminal section; belongs to the Fmt family. UDP-L-Ara4N formyltransferase subfamily. It in the C-terminal section; belongs to the NAD(P)-dependent epimerase/dehydratase family. UDP-glucuronic acid decarboxylase subfamily. In terms of assembly, homohexamer, formed by a dimer of trimers.

The catalysed reaction is UDP-alpha-D-glucuronate + NAD(+) = UDP-beta-L-threo-pentopyranos-4-ulose + CO2 + NADH. It catalyses the reaction UDP-4-amino-4-deoxy-beta-L-arabinose + (6R)-10-formyltetrahydrofolate = UDP-4-deoxy-4-formamido-beta-L-arabinose + (6S)-5,6,7,8-tetrahydrofolate + H(+). It functions in the pathway nucleotide-sugar biosynthesis; UDP-4-deoxy-4-formamido-beta-L-arabinose biosynthesis; UDP-4-deoxy-4-formamido-beta-L-arabinose from UDP-alpha-D-glucuronate: step 1/3. The protein operates within nucleotide-sugar biosynthesis; UDP-4-deoxy-4-formamido-beta-L-arabinose biosynthesis; UDP-4-deoxy-4-formamido-beta-L-arabinose from UDP-alpha-D-glucuronate: step 3/3. Its pathway is bacterial outer membrane biogenesis; lipopolysaccharide biosynthesis. Functionally, bifunctional enzyme that catalyzes the oxidative decarboxylation of UDP-glucuronic acid (UDP-GlcUA) to UDP-4-keto-arabinose (UDP-Ara4O) and the addition of a formyl group to UDP-4-amino-4-deoxy-L-arabinose (UDP-L-Ara4N) to form UDP-L-4-formamido-arabinose (UDP-L-Ara4FN). The modified arabinose is attached to lipid A and is required for resistance to polymyxin and cationic antimicrobial peptides. This is Bifunctional polymyxin resistance protein ArnA from Pectobacterium atrosepticum (strain SCRI 1043 / ATCC BAA-672) (Erwinia carotovora subsp. atroseptica).